A 525-amino-acid chain; its full sequence is Beta-1,4-xylosyltransferase IRX14 (525 aa).

Topologically, residues 1–35 (MKLSALHQSYLNRRSNSFRSPTSLDSSVDGSGKSL) are cytoplasmic. The chain crosses the membrane as a helical; Signal-anchor for type II membrane protein span at residues 36-56 (IAVFWLILHCLCCLISLVLGF). Residues 57-525 (RFSRLVFFFL…SSSSKHQERN (469 aa)) are Lumenal-facing. 3 N-linked (GlcNAc...) asparagine glycosylation sites follow: N102, N204, and N326. The interval 452–525 (RTPWPDVPPE…SSSSKHQERN (74 aa)) is disordered. Residues 471 to 488 (PLSQGNTVVVIPKQQQHP) are compositionally biased toward polar residues. Residues 489–503 (TKIRKPKRKSKKSKH) show a composition bias toward basic residues. The segment covering 508–519 (TDTTTQVYSSSS) has biased composition (polar residues).

Belongs to the glycosyltransferase 43 family. In terms of tissue distribution, expressed in developing interfascicular fibers and xylem cells in stems and developing secondary xylem in roots.

Its subcellular location is the golgi apparatus membrane. The catalysed reaction is [(1-&gt;4)-beta-D-xylan](n) + UDP-alpha-D-xylose = [(1-&gt;4)-beta-D-xylan](n+1) + UDP + H(+). Its function is as follows. Involved in the synthesis of the hemicellulose glucuronoxylan, a major component of secondary cell walls. Involved in the elongation of glucuronoxylan xylosyl backbone. Xylan xylosyltransferase that acts cooperatively with IRX9 to achieve the successive addition of xylosyl residues during xylan backbone elongation. Required for the proper composition and structural properties of released seed coat mucilage. Required for the production of highly branched xylan polymers in seed coat mucilage. Xylan with xylose side chains seems to be necessary for pectin attachment to the seed surface. Together with MUCI70, required for xylan and pectin synthesis in seed coat epidermal (SCE) cells. This is Beta-1,4-xylosyltransferase IRX14 from Arabidopsis thaliana (Mouse-ear cress).